The chain runs to 577 residues: Nuclear fusion protein tht1 (577 aa).

Residues 1–29 form the signal peptide; that stretch reads MKFHPTRPFGLYFEFFIIISFFFTSESTG. Residues 30–404 are Lumenal-facing; the sequence is DVESFMKYSN…MNVYFKGLSN (375 aa). Residues asparagine 163 and asparagine 372 are each glycosylated (N-linked (GlcNAc...) asparagine). Residues 405–425 traverse the membrane as a helical segment; that stretch reads IISSFAFIGFTLFATLSSLFF. Topologically, residues 426–433 are cytoplasmic; it reads KVLKIHRR. The chain crosses the membrane as a helical span at residues 434–454; the sequence is PIIVFGSLSIIFIHIYCFKIT. Topologically, residues 455-470 are lumenal; the sequence is SWVNLYGWITCTIART. Residues 471–491 traverse the membrane as a helical segment; that stretch reads LSFIKLNIRTFYLTAFLCALL. Topologically, residues 492 to 577 are cytoplasmic; that stretch reads NFLRYLKYRN…ESLEQSPWWD (86 aa).

This sequence belongs to the KAR5 family. In terms of processing, N-glycosylated.

It localises to the endoplasmic reticulum membrane. Its subcellular location is the nucleus membrane. Required for nuclear membrane fusion during karyogamy. The chain is Nuclear fusion protein tht1 (tht1) from Schizosaccharomyces pombe (strain 972 / ATCC 24843) (Fission yeast).